A 148-amino-acid polypeptide reads, in one-letter code: HTH-type transcriptional regulator Ptr1 (148 aa).

The HTH asnC-type domain occupies 2 to 63 (LDRIDLKILR…SINPKNLGFE (62 aa)). Positions 21–40 (FREIGRELGISEGTVRNRVK) form a DNA-binding region, H-T-H motif.

In terms of assembly, homodimer.

Its function is as follows. Participates in positive as well as negative regulation of transcription. Binds to its own promoter. This is HTH-type transcriptional regulator Ptr1 (ptr1) from Methanocaldococcus jannaschii (strain ATCC 43067 / DSM 2661 / JAL-1 / JCM 10045 / NBRC 100440) (Methanococcus jannaschii).